The sequence spans 243 residues: MATSRLQLEGDDSVHLHITHANLKSFSADARFSPQMSVEAVKEKLWKKCGTSVNSMALELYDDSGSKVAVLSDDSRPLGFFSPFDGFRLHIIDLDPSSVTTGGWLEDTSLVEKYNISEEDYAKRTDSFRKFKEKRVSQNPVAAEAKTKENYMEDLCANIKVGDRCQVEPGEKRGMVKYVGRAESLGPGYWVGIQYDEPLGKHDGMVKGTRFFECPRLQGGMVRPDKVKVGDYPERDPFEEDEI.

Residues 181-223 enclose the CAP-Gly domain; the sequence is RAESLGPGYWVGIQYDEPLGKHDGMVKGTRFFECPRLQGGMVR.

Belongs to the TBCB family. As to quaternary structure, supercomplex made of cofactors A to E. Cofactors A and D function by capturing and stabilizing tubulin in a quasi-native conformation. Cofactor E binds to the cofactor D-tubulin complex; interaction with cofactor C then causes the release of tubulin polypeptides that are committed to the native state. Interacts with TUBA6. As to expression, expressed in roots, stems, leaves, flowers and siliques.

Its subcellular location is the cytoplasm. In terms of biological role, involved in control of cell division. Regulates probably the availability of alpha-tubulin for dimerization of alpha-/beta-tubulin, which is required for proper microtubule biogenesis. Decreased expression of TFCB results in enlarged mesophyll cells and leaf epidermal cells with bulged nuclei, increased ploidy and increased numbers of spindles and phragmoplasts. The protein is Tubulin-folding cofactor B (TFCB) of Arabidopsis thaliana (Mouse-ear cress).